A 316-amino-acid chain; its full sequence is Porphobilinogen deaminase (316 aa).

C245 is modified (S-(dipyrrolylmethanemethyl)cysteine).

The protein belongs to the HMBS family. Monomer. It depends on dipyrromethane as a cofactor.

It catalyses the reaction 4 porphobilinogen + H2O = hydroxymethylbilane + 4 NH4(+). The protein operates within porphyrin-containing compound metabolism; protoporphyrin-IX biosynthesis; coproporphyrinogen-III from 5-aminolevulinate: step 2/4. It participates in porphyrin-containing compound metabolism; chlorophyll biosynthesis. Its function is as follows. Tetrapolymerization of the monopyrrole PBG into the hydroxymethylbilane pre-uroporphyrinogen in several discrete steps. This chain is Porphobilinogen deaminase, found in Prochlorococcus marinus (strain MIT 9515).